Consider the following 206-residue polypeptide: Alpha-1-acid glycoprotein 3 (206 aa).

An N-terminal signal peptide occupies residues 1-18 (MELHTVLIMLSLLPLLEA). N-linked (GlcNAc...) asparagine glycans are attached at residues Asn33, Asn75, and Asn103. Cys90 and Cys183 form a disulfide bridge. The segment at 187-206 (EKKHLELEKETKKDPEESQA) is disordered.

It belongs to the calycin superfamily. Lipocalin family.

The protein localises to the secreted. Functionally, functions as a transport protein in the blood stream. Binds various ligands in the interior of its beta-barrel domain. Appears to function in modulating the activity of the immune system during the acute-phase reaction. This is Alpha-1-acid glycoprotein 3 (Orm3) from Mus musculus (Mouse).